A 628-amino-acid chain; its full sequence is Eukaryotic peptide chain release factor GTP-binding subunit ERF3B (628 aa).

The segment covering 1–10 (MDSGSSSSDS) has biased composition (low complexity). 3 disordered regions span residues 1–49 (MDSG…SAFS), 72–124 (FLRG…LEGS), and 146–195 (LEES…VIVP). Residues 201–425 (KEHVNVVFIG…YLDNLPNFNR (225 aa)) form the tr-type G domain. A G1 region spans residues 210–217 (GHVDAGKS). 213-218 (DAGKST) is a binding site for GTP. Residues 266 to 270 (GKTVE) form a G2 region. Positions 287–290 (DAPG) are G3. GTP is bound by residues 349 to 352 (NKMD) and 391 to 393 (SGL). A G4 region spans residues 349–352 (NKMD). Residues 391 to 393 (SGL) are G5.

It belongs to the TRAFAC class translation factor GTPase superfamily. Classic translation factor GTPase family. ERF3 subfamily. Component of the eRF1-eRF3-GTP ternary complex, composed of ETF1/ERF1 and ERF3 (GSPT1/ERF3A or GSPT2/ERF3B) and GTP. Component of the transient SURF (SMG1-UPF1-eRF1-eRF3) complex. Interacts with UPF1 and PABPC1. As to expression, highly expressed in IUCC stage II colorectal cancer (CRC).

It is found in the cytoplasm. The enzyme catalyses GTP + H2O = GDP + phosphate + H(+). Its function is as follows. GTPase component of the eRF1-eRF3-GTP ternary complex, a ternary complex that mediates translation termination in response to the termination codons UAA, UAG and UGA. GSPT2/ERF3B mediates ETF1/ERF1 delivery to stop codons: The eRF1-eRF3-GTP complex binds to a stop codon in the ribosomal A-site. GTP hydrolysis by GSPT2/ERF3B induces a conformational change that leads to its dissociation, permitting ETF1/ERF1 to accommodate fully in the A-site. Component of the transient SURF complex which recruits UPF1 to stalled ribosomes in the context of nonsense-mediated decay (NMD) of mRNAs containing premature stop codons. The chain is Eukaryotic peptide chain release factor GTP-binding subunit ERF3B (GSPT2) from Homo sapiens (Human).